The chain runs to 204 residues: Protein phosphatase 1 regulatory subunit 1B (204 aa).

At Met1 the chain carries N-acetylmethionine. Positions 1 to 204 (MDPKDRKKIQ…QRPSPSEPGT (204 aa)) are disordered. Thr34 is modified (phosphothreonine; by PKA). The span at 41–63 (LSEHSSPEEEASPHQRASGEGHH) shows a compositional bias: basic and acidic residues. Ser45 and Ser46 each carry phosphoserine. At Thr75 the chain carries Phosphothreonine; by CDK5. Residues 89 to 100 (HLQSISNLNENQ) show a composition bias toward polar residues. Residue Ser102 is modified to Phosphoserine. Basic and acidic residues predominate over residues 109 to 118 (GELRELGYPR). Composition is skewed to acidic residues over residues 119–138 (EEDEEEEEDDEEEEEEEDSQ) and 170–183 (DESERDGGSEDQVE). Ser137 is modified (phosphoserine). Residue Ser198 is modified to Phosphoserine.

Belongs to the protein phosphatase inhibitor 1 family. Dopamine- and cyclic AMP-regulated neuronal phosphoprotein. Post-translationally, phosphorylation of Thr-34 is required for activity.

The protein localises to the cytoplasm. In terms of biological role, inhibitor of protein-phosphatase 1. The chain is Protein phosphatase 1 regulatory subunit 1B (PPP1R1B) from Homo sapiens (Human).